We begin with the raw amino-acid sequence, 151 residues long: Large ribosomal subunit protein uL13 (151 aa).

It belongs to the universal ribosomal protein uL13 family. In terms of assembly, part of the 50S ribosomal subunit.

Its function is as follows. This protein is one of the early assembly proteins of the 50S ribosomal subunit, although it is not seen to bind rRNA by itself. It is important during the early stages of 50S assembly. This is Large ribosomal subunit protein uL13 from Rippkaea orientalis (strain PCC 8801 / RF-1) (Cyanothece sp. (strain PCC 8801)).